Reading from the N-terminus, the 269-residue chain is MNTKAVAHPDIAVWIMALGIAFSMALVLTALFNANPWEDHTYDLAPPIVAGMAAPHRDGREKMVCSSCHIVTPASAATGPGAGTLPIVEGTPAPHVDGREKMACASCHTIVKKGSVAKSGKASPAPVAFSQGMPLPEAMSVALAVTPAPAPLGNEAHERMVPFRYQGKIVSVAGAGTRSVWGDIYIQINDGINPPMWIDLAPLWFLQAEGCLVRPGMFVKGTAFRDPTQASAGLDYAMSVMANGEVCALRDDHLNGLWANVGGVDAEER.

The Cytoplasmic portion of the chain corresponds to 1-10 (MNTKAVAHPD). The chain crosses the membrane as a helical span at residues 11–31 (IAVWIMALGIAFSMALVLTAL). At 32 to 269 (FNANPWEDHT…NVGGVDAEER (238 aa)) the chain is on the lumenal side. An MCR (magnetochrome) 1 motif is present at residues 48 to 71 (IVAGMAAPHRDGREKMVCSSCHIV). Residues Cys65, Cys68, His69, Cys104, Cys107, and His108 each coordinate heme. The MCR 2 motif lies at 87–110 (IVEGTPAPHVDGREKMACASCHTI).

It belongs to the magnetosome MamX family. Probably interacts with FtsZ-like and MamY proteins. Requires heme as cofactor.

It localises to the magnetosome membrane. Functionally, required for correct biomineralization of the magnetosome, maybe via redox control. May function with MamY, MamZ amd Mms6 in biomineralization. In Magnetospirillum gryphiswaldense (strain DSM 6361 / JCM 21280 / NBRC 15271 / MSR-1), this protein is Magnetosome protein MamX.